The primary structure comprises 421 residues: Gamma-glutamyl phosphate reductase (421 aa).

The protein belongs to the gamma-glutamyl phosphate reductase family.

The protein localises to the cytoplasm. It catalyses the reaction L-glutamate 5-semialdehyde + phosphate + NADP(+) = L-glutamyl 5-phosphate + NADPH + H(+). The protein operates within amino-acid biosynthesis; L-proline biosynthesis; L-glutamate 5-semialdehyde from L-glutamate: step 2/2. Its function is as follows. Catalyzes the NADPH-dependent reduction of L-glutamate 5-phosphate into L-glutamate 5-semialdehyde and phosphate. The product spontaneously undergoes cyclization to form 1-pyrroline-5-carboxylate. The chain is Gamma-glutamyl phosphate reductase from Herminiimonas arsenicoxydans.